The chain runs to 321 residues: Transmembrane protein 255A (321 aa).

A run of 4 helical transmembrane segments spans residues 29-49 (VFVT…GMAA), 56-76 (VTVG…LGII), 88-108 (LVAS…CAIV), and 200-220 (TILN…LGGF). The span at 279-297 (STPSGLSDDPNGQASSFMW) shows a compositional bias: polar residues. Residues 279 to 300 (STPSGLSDDPNGQASSFMWPSN) form a disordered region.

The protein belongs to the TMEM255 family.

It is found in the membrane. The polypeptide is Transmembrane protein 255A (tmem255a) (Xenopus laevis (African clawed frog)).